Consider the following 410-residue polypeptide: Neuroserpin (410 aa).

The first 16 residues, 1 to 16 (MAYLGLLSLVALQSLV), serve as a signal peptide directing secretion. Residue S83 is modified to Phosphoserine. N157, N321, and N401 each carry an N-linked (GlcNAc...) asparagine glycan. An O-linked (Xyl...) (chondroitin sulfate) serine glycan is attached at S403.

Belongs to the serpin family. Detected in adult pituitary and adrenal gland.

It is found in the secreted. The protein resides in the cytoplasmic vesicle. Its subcellular location is the secretory vesicle lumen. The protein localises to the perikaryon. Functionally, serine protease inhibitor that inhibits plasminogen activators and plasmin but not thrombin. May be involved in the formation or reorganization of synaptic connections as well as for synaptic plasticity in the adult nervous system. May protect neurons from cell damage by tissue-type plasminogen activator. This chain is Neuroserpin (Serpini1), found in Rattus norvegicus (Rat).